The chain runs to 445 residues: Phosphoglucosamine mutase (445 aa).

S100 functions as the Phosphoserine intermediate in the catalytic mechanism. Mg(2+) is bound by residues S100, D240, D242, and D244. A Phosphoserine modification is found at S100.

This sequence belongs to the phosphohexose mutase family. Requires Mg(2+) as cofactor. Post-translationally, activated by phosphorylation.

The enzyme catalyses alpha-D-glucosamine 1-phosphate = D-glucosamine 6-phosphate. Catalyzes the conversion of glucosamine-6-phosphate to glucosamine-1-phosphate. This is Phosphoglucosamine mutase from Pelotomaculum thermopropionicum (strain DSM 13744 / JCM 10971 / SI).